Consider the following 237-residue polypeptide: Ribosomal RNA small subunit methyltransferase G (237 aa).

Residues G78, F83, 129 to 130 (AE), and R146 each bind S-adenosyl-L-methionine.

Belongs to the methyltransferase superfamily. RNA methyltransferase RsmG family.

It is found in the cytoplasm. Its function is as follows. Specifically methylates the N7 position of a guanine in 16S rRNA. The sequence is that of Ribosomal RNA small subunit methyltransferase G from Mesoplasma florum (strain ATCC 33453 / NBRC 100688 / NCTC 11704 / L1) (Acholeplasma florum).